Consider the following 389-residue polypeptide: Transcription factor MYB97 (389 aa).

2 HTH myb-type domains span residues 16–68 and 69–123; these read GVVL…ANHL and RPNL…KRFQ. 2 DNA-binding regions (H-T-H motif) span residues 44-68 and 96-119; these read WNSV…ANHL and WARM…NTRL. The segment at 131 to 159 is disordered; it reads PPEYSQNNHQQQMYPQQPSSPLPSQTPAS. A compositionally biased stretch (low complexity) spans 140 to 159; sequence QQQMYPQQPSSPLPSQTPAS.

Accumulates in pollen grains and pollen tube. Mostly expressed in mature pollen grains, and, to a lower extent, in inflorescences and siliques.

The protein resides in the nucleus. Its function is as follows. Transcription activator. Binds to 5'-CAACTGTC-3' and/or 5'-TAACAAA-3' motif in target gene promoter to promote their expression. Together with MYB101 and MYB120, functions as a male factor that controls pollen tube-synergid interaction in fertilization. Required for pollen tube growth arrest and sperm cell release in the female gametophyte, probably via the regulation of pollen tube-specific gene expression. The chain is Transcription factor MYB97 from Arabidopsis thaliana (Mouse-ear cress).